The primary structure comprises 638 residues: Golgin subfamily A member 8S (638 aa).

Positions 1-11 are enriched in pro residues; that stretch reads MWPQARLPPHP. Residues 1 to 84 are disordered; the sequence is MWPQARLPPH…GESPTSSATL (84 aa). Residues 50-62 are compositionally biased toward polar residues; that stretch reads TNGSIHETATSGG. Coiled-coil stretches lie at residues 105–160, 223–275, and 318–417; these read VSQL…LNTD, LEQS…MSQE, and EAEL…QQKQ. Disordered stretches follow at residues 427–453, 510–532, and 556–575; these read ALPGEGDGGGHLDSEGEEAPRPIPSIP, KDAALGGGHHQAGAQGGDEDEAA, and AHNPADEPGPGAPAPQELGA. The segment covering 434–446 has biased composition (basic and acidic residues); it reads GGGHLDSEGEEAP. Gly residues predominate over residues 514-525; sequence LGGGHHQAGAQG. Over residues 561-574 the composition is skewed to low complexity; it reads DEPGPGAPAPQELG.

The protein belongs to the GOLGA8 family.

This chain is Golgin subfamily A member 8S, found in Homo sapiens (Human).